Consider the following 27-residue polypeptide: rRNA/tRNA 2'-O-methyltransferase fibrillarin (27 aa).

The segment covering residue 1–glycine 12 has biased composition (gly residues). The disordered stretch occupies residues residue 1–glycine 27. Arginine 5, arginine 11, arginine 16, and arginine 19 each carry asymmetric dimethylarginine.

This sequence belongs to the methyltransferase superfamily. Fibrillarin family. Component of box C/D small nucleolar ribonucleoprotein (snoRNP) particles. It is associated with the U3, U8 and U13 small nuclear RNAs.

The protein resides in the nucleus. Its subcellular location is the nucleolus. The enzyme catalyses L-glutaminyl-[histone H2A] + S-adenosyl-L-methionine = N(5)-methyl-L-glutaminyl-[histone H2A] + S-adenosyl-L-homocysteine + H(+). S-adenosyl-L-methionine-dependent methyltransferase that has the ability to methylate both RNAs and proteins. Involved in pre-rRNA processing. Utilizes the methyl donor S-adenosyl-L-methionine to catalyze the site-specific 2'-hydroxyl methylation of ribose moieties in pre-ribosomal RNA. Site specificity is provided by a guide RNA that base pairs with the substrate. Methylation occurs at a characteristic distance from the sequence involved in base pairing with the guide RNA. Also acts as a protein methyltransferase by mediating methylation of 'Gln-105' of histone H2A (H2AQ105me), a modification that impairs binding of the FACT complex and is specifically present at 35S ribosomal DNA locus. The polypeptide is rRNA/tRNA 2'-O-methyltransferase fibrillarin (Physarum polycephalum (Slime mold)).